Here is a 303-residue protein sequence, read N- to C-terminus: RELT-like protein 2 (303 aa).

The helical transmembrane segment at 15–35 (LYMLFLLVLVFFLMGLVGFMI) threads the bilayer. Disordered stretches follow at residues 47–68 (RTSR…DDVN), 135–214 (CSRS…QPRT), and 249–303 (PCTL…AGGM). The residue at position 52 (Ser52) is a Phosphoserine. Basic and acidic residues-rich tracts occupy residues 148–158 (RSKEGKSRPRP) and 172–188 (THIE…DGSP). Positions 194 to 212 (GSGGGQEPGGSQAAGGGQP) are enriched in gly residues. A compositionally biased stretch (polar residues) spans 274 to 295 (GLSSQEANGQPTKLDTSGQQES).

This sequence belongs to the RELT family. Interacts with RELT, RELL1, OXSR1, PLSCR1 and TRAF2.

It localises to the cell membrane. Its function is as follows. Induces activation of MAPK14/p38 cascade, when overexpressed. Induces apoptosis, when overexpressed. This chain is RELT-like protein 2 (Rell2), found in Mus musculus (Mouse).